We begin with the raw amino-acid sequence, 227 residues long: Cytochrome c oxidase subunit 2 (227 aa).

The Mitochondrial intermembrane portion of the chain corresponds to 1-14 (MAYPVQLGFQDAAS). The chain crosses the membrane as a helical span at residues 15–45 (PIMEELLYFHDHTLMIMFLISSLVLYIISLM). At 46–59 (LTTELMHTNTMDAQ) the chain is on the mitochondrial matrix side. A helical transmembrane segment spans residues 60 to 87 (EVETVWTILPAAILILIALPSLRILYMM). Over 88–227 (DEITTPSLTL…HFEEWLLSML (140 aa)) the chain is Mitochondrial intermembrane. Residues His161, Cys196, Glu198, Cys200, His204, and Met207 each coordinate Cu cation. Residue Glu198 participates in Mg(2+) binding.

Belongs to the cytochrome c oxidase subunit 2 family. Component of the cytochrome c oxidase (complex IV, CIV), a multisubunit enzyme composed of 14 subunits. The complex is composed of a catalytic core of 3 subunits MT-CO1, MT-CO2 and MT-CO3, encoded in the mitochondrial DNA, and 11 supernumerary subunits COX4I, COX5A, COX5B, COX6A, COX6B, COX6C, COX7A, COX7B, COX7C, COX8 and NDUFA4, which are encoded in the nuclear genome. The complex exists as a monomer or a dimer and forms supercomplexes (SCs) in the inner mitochondrial membrane with NADH-ubiquinone oxidoreductase (complex I, CI) and ubiquinol-cytochrome c oxidoreductase (cytochrome b-c1 complex, complex III, CIII), resulting in different assemblies (supercomplex SCI(1)III(2)IV(1) and megacomplex MCI(2)III(2)IV(2)). Found in a complex with TMEM177, COA6, COX18, COX20, SCO1 and SCO2. Interacts with TMEM177 in a COX20-dependent manner. Interacts with COX20. Interacts with COX16. The cofactor is Cu cation.

It localises to the mitochondrion inner membrane. The enzyme catalyses 4 Fe(II)-[cytochrome c] + O2 + 8 H(+)(in) = 4 Fe(III)-[cytochrome c] + 2 H2O + 4 H(+)(out). Component of the cytochrome c oxidase, the last enzyme in the mitochondrial electron transport chain which drives oxidative phosphorylation. The respiratory chain contains 3 multisubunit complexes succinate dehydrogenase (complex II, CII), ubiquinol-cytochrome c oxidoreductase (cytochrome b-c1 complex, complex III, CIII) and cytochrome c oxidase (complex IV, CIV), that cooperate to transfer electrons derived from NADH and succinate to molecular oxygen, creating an electrochemical gradient over the inner membrane that drives transmembrane transport and the ATP synthase. Cytochrome c oxidase is the component of the respiratory chain that catalyzes the reduction of oxygen to water. Electrons originating from reduced cytochrome c in the intermembrane space (IMS) are transferred via the dinuclear copper A center (CU(A)) of subunit 2 and heme A of subunit 1 to the active site in subunit 1, a binuclear center (BNC) formed by heme A3 and copper B (CU(B)). The BNC reduces molecular oxygen to 2 water molecules using 4 electrons from cytochrome c in the IMS and 4 protons from the mitochondrial matrix. The polypeptide is Cytochrome c oxidase subunit 2 (MT-CO2) (Hapalemur griseus (Gray gentle lemur)).